The following is a 141-amino-acid chain: Protein Turandot Z (141 aa).

Residues 1–23 (MYFAIRLSFVLAVLFCLTGNGNA) form the signal peptide.

This sequence belongs to the Turandot family.

The protein localises to the secreted. In terms of biological role, a humoral factor that may play a role in stress tolerance. In Drosophila yakuba (Fruit fly), this protein is Protein Turandot Z.